The following is an 83-amino-acid chain: U-actitoxin-Avd8d (83 aa).

The signal sequence occupies residues 1 to 19; it reads MASTRLFVLLVIGTVLLCQ. Positions 20-38 are excised as a propeptide; it reads VSGFLDELLAEHELPQDMT.

This sequence belongs to the sea anemone 8 toxin family.

Its subcellular location is the secreted. The protein localises to the nematocyst. This Anemonia viridis (Snakelocks anemone) protein is U-actitoxin-Avd8d.